The primary structure comprises 130 residues: MSMQDPIADMITCIRNGQFSNKIFVIVPFSRLKENIVKVLKFEGYIINYKIKKNNNKVLKIFLKYFNGKSVIENIKRISRPSLRRYCNKRNLPIVMNNLGIAIISTSRGVMTDRIAREKGLGGEIICYVD.

It belongs to the universal ribosomal protein uS8 family. As to quaternary structure, part of the 30S ribosomal subunit. Contacts proteins S5 and S12.

In terms of biological role, one of the primary rRNA binding proteins, it binds directly to 16S rRNA central domain where it helps coordinate assembly of the platform of the 30S subunit. In Buchnera aphidicola subsp. Cinara cedri (strain Cc), this protein is Small ribosomal subunit protein uS8.